The chain runs to 356 residues: Protein pelota homolog (356 aa).

It belongs to the eukaryotic release factor 1 family. Pelota subfamily. As to quaternary structure, monomer. Requires a divalent metal cation as cofactor.

It is found in the cytoplasm. May function in recognizing stalled ribosomes, interact with stem-loop structures in stalled mRNA molecules, and effect endonucleolytic cleavage of the mRNA. May play a role in the release non-functional ribosomes and degradation of damaged mRNAs. Has endoribonuclease activity. The protein is Protein pelota homolog of Desulfurococcus amylolyticus (strain DSM 18924 / JCM 16383 / VKM B-2413 / 1221n) (Desulfurococcus kamchatkensis).